The primary structure comprises 242 residues: Small ribosomal subunit protein uS2 (242 aa).

This sequence belongs to the universal ribosomal protein uS2 family.

This chain is Small ribosomal subunit protein uS2, found in Shewanella amazonensis (strain ATCC BAA-1098 / SB2B).